A 550-amino-acid chain; its full sequence is Hydroxylamine reductase (550 aa).

[2Fe-2S] cluster is bound by residues Cys3, Cys6, Cys18, and Cys25. Residues His249, Glu273, Cys317, Cys405, Cys433, Cys458, Glu492, and Lys494 each contribute to the hybrid [4Fe-2O-2S] cluster site. A Cysteine persulfide modification is found at Cys405.

It belongs to the HCP family. [2Fe-2S] cluster is required as a cofactor. The cofactor is hybrid [4Fe-2O-2S] cluster.

It localises to the cytoplasm. The enzyme catalyses A + NH4(+) + H2O = hydroxylamine + AH2 + H(+). Functionally, catalyzes the reduction of hydroxylamine to form NH(3) and H(2)O. This Salmonella typhimurium (strain LT2 / SGSC1412 / ATCC 700720) protein is Hydroxylamine reductase.